Here is a 697-residue protein sequence, read N- to C-terminus: Sialidase B (697 aa).

Positions 1–29 (MNKRGLYSKLGISVVGISLLMGVPTLIHA) are cleaved as a signal peptide. Arg245 is a substrate binding site. Asp270 serves as the catalytic Proton acceptor. BNR repeat units lie at residues 280–291 (SYSDDNGKTWSE), 462–473 (TTSQNRGESWEQ), and 517–528 (LISDDSGQTWKK). Glu541 is an active-site residue. Arg557 contacts substrate. The stretch at 566–577 (MTSRDSGETWSK) is one BNR 4 repeat. Residue Arg619 coordinates substrate. Tyr653 serves as the catalytic Nucleophile.

This sequence belongs to the glycosyl hydrolase 33 family.

It carries out the reaction Hydrolysis of alpha-(2-&gt;3)-, alpha-(2-&gt;6)-, alpha-(2-&gt;8)- glycosidic linkages of terminal sialic acid residues in oligosaccharides, glycoproteins, glycolipids, colominic acid and synthetic substrates.. The polypeptide is Sialidase B (nanB) (Streptococcus pneumoniae serotype 4 (strain ATCC BAA-334 / TIGR4)).